The sequence spans 60 residues: Large ribosomal subunit protein bL32 (60 aa).

Disordered stretches follow at residues 1–22 (MAVQQNKKSPSKRGMHRSHNAL) and 34–60 (GETHLRHHISPNGFYRGRQVLKNKSEA). Residues 9–19 (SPSKRGMHRSH) show a composition bias toward basic residues.

It belongs to the bacterial ribosomal protein bL32 family.

The polypeptide is Large ribosomal subunit protein bL32 (Variovorax paradoxus (strain S110)).